The sequence spans 195 residues: Ubiquitin-conjugating enzyme E2 T (195 aa).

The 151-residue stretch at 2–152 (QRTSRLKREL…ARQWTEKHAR (151 aa)) folds into the UBC core domain. Residue C86 is the Glycyl thioester intermediate of the active site. K91 participates in a covalent cross-link: Glycyl lysine isopeptide (Lys-Gly) (interchain with G-Cter in ubiquitin). Over residues 146 to 157 (WTEKHARQKTDE) the composition is skewed to basic and acidic residues. Residues 146-195 (WTEKHARQKTDEEGMPGSLPEVGGSEGPSAAQKRKAGQLSSGGKRFCPDV) form a disordered region. K180 is covalently cross-linked (Glycyl lysine isopeptide (Lys-Gly) (interchain with G-Cter in ubiquitin)). K189 is covalently cross-linked (Glycyl lysine isopeptide (Lys-Gly) (interchain with G-Cter in SUMO2)).

This sequence belongs to the ubiquitin-conjugating enzyme family. As to quaternary structure, interacts with FANCL and BRCA1. In terms of processing, auto-ubiquitinated. Effects of auto-monoubiquitination at Lys-91 and Lys-180 are unclear.

It localises to the nucleus. The enzyme catalyses S-ubiquitinyl-[E1 ubiquitin-activating enzyme]-L-cysteine + [E2 ubiquitin-conjugating enzyme]-L-cysteine = [E1 ubiquitin-activating enzyme]-L-cysteine + S-ubiquitinyl-[E2 ubiquitin-conjugating enzyme]-L-cysteine.. It functions in the pathway protein modification; protein ubiquitination. Functionally, accepts ubiquitin from the E1 complex and catalyzes its covalent attachment to other proteins. Catalyzes monoubiquitination. Involved in mitomycin-C (MMC)-induced DNA repair: acts as a specific E2 ubiquitin-conjugating enzyme for the Fanconi anemia complex by associating with E3 ubiquitin-protein ligase FANCL and catalyzing monoubiquitination of FANCD2, a key step in the DNA damage pathway. Also mediates monoubiquitination of FANCL and FANCI. May contribute to ubiquitination and degradation of BRCA1. In vitro able to promote polyubiquitination using all 7 ubiquitin Lys residues, but may prefer 'Lys-11'-, 'Lys-27'-, 'Lys-48'- and 'Lys-63'-linked polyubiquitination. The sequence is that of Ubiquitin-conjugating enzyme E2 T (UBE2T) from Bos taurus (Bovine).